A 229-amino-acid polypeptide reads, in one-letter code: 5'-methylthioadenosine/S-adenosylhomocysteine nucleosidase (229 aa).

Glutamate 12 acts as the Proton acceptor in catalysis. Residues glycine 78, isoleucine 152, and 173 to 174 (ME) each bind substrate. The active-site Proton donor is the aspartate 197.

This sequence belongs to the PNP/UDP phosphorylase family. MtnN subfamily.

It catalyses the reaction S-adenosyl-L-homocysteine + H2O = S-(5-deoxy-D-ribos-5-yl)-L-homocysteine + adenine. The catalysed reaction is S-methyl-5'-thioadenosine + H2O = 5-(methylsulfanyl)-D-ribose + adenine. It carries out the reaction 5'-deoxyadenosine + H2O = 5-deoxy-D-ribose + adenine. The protein operates within amino-acid biosynthesis; L-methionine biosynthesis via salvage pathway; S-methyl-5-thio-alpha-D-ribose 1-phosphate from S-methyl-5'-thioadenosine (hydrolase route): step 1/2. In terms of biological role, catalyzes the irreversible cleavage of the glycosidic bond in both 5'-methylthioadenosine (MTA) and S-adenosylhomocysteine (SAH/AdoHcy) to adenine and the corresponding thioribose, 5'-methylthioribose and S-ribosylhomocysteine, respectively. Also cleaves 5'-deoxyadenosine, a toxic by-product of radical S-adenosylmethionine (SAM) enzymes, into 5-deoxyribose and adenine. The chain is 5'-methylthioadenosine/S-adenosylhomocysteine nucleosidase from Haemophilus influenzae (strain PittEE).